Consider the following 364-residue polypeptide: Aminomethyltransferase (364 aa).

It belongs to the GcvT family. The glycine cleavage system is composed of four proteins: P, T, L and H.

It catalyses the reaction N(6)-[(R)-S(8)-aminomethyldihydrolipoyl]-L-lysyl-[protein] + (6S)-5,6,7,8-tetrahydrofolate = N(6)-[(R)-dihydrolipoyl]-L-lysyl-[protein] + (6R)-5,10-methylene-5,6,7,8-tetrahydrofolate + NH4(+). Functionally, the glycine cleavage system catalyzes the degradation of glycine. The chain is Aminomethyltransferase from Shewanella piezotolerans (strain WP3 / JCM 13877).